Here is an 82-residue protein sequence, read N- to C-terminus: Myosin light chain alkali (82 aa).

In terms of domain architecture, EF-hand spans 7–42 (GCYEDFIECLKLYDKEENGTMMLAELQHALLALGES).

As to quaternary structure, myosin is a hexamer of 2 heavy chains and 4 light chains.

The chain is Myosin light chain alkali (Mlc1) from Drosophila mauritiana (Fruit fly).